A 216-amino-acid chain; its full sequence is Thymidylate kinase (216 aa).

Gly-9–Thr-16 is an ATP binding site.

The protein belongs to the thymidylate kinase family.

The enzyme catalyses dTMP + ATP = dTDP + ADP. Its function is as follows. Phosphorylation of dTMP to form dTDP in both de novo and salvage pathways of dTTP synthesis. The chain is Thymidylate kinase from Syntrophotalea carbinolica (strain DSM 2380 / NBRC 103641 / GraBd1) (Pelobacter carbinolicus).